The chain runs to 151 residues: Cytochrome c-type biogenesis protein CcmE 1 (151 aa).

The Cytoplasmic portion of the chain corresponds to 1–8 (MNPLRKKR). Residues 9 to 29 (LIIILAILVGVGAAVGLALSA) traverse the membrane as a helical; Signal-anchor for type II membrane protein segment. Residues 30–151 (LQQNINLFYT…QSAPTPAKEG (122 aa)) lie on the Periplasmic side of the membrane. Heme is bound by residues His124 and Tyr128. The tract at residues 131–151 (PEVTKALKDSGQSAPTPAKEG) is disordered.

Belongs to the CcmE/CycJ family.

It localises to the cell inner membrane. In terms of biological role, heme chaperone required for the biogenesis of c-type cytochromes. Transiently binds heme delivered by CcmC and transfers the heme to apo-cytochromes in a process facilitated by CcmF and CcmH. In Pseudomonas fluorescens (strain Pf0-1), this protein is Cytochrome c-type biogenesis protein CcmE 1.